A 446-amino-acid polypeptide reads, in one-letter code: Histidinol dehydrogenase homolog (446 aa).

His266 contacts Zn(2+). Residues Glu334 and His335 each act as proton acceptor in the active site. His427 contributes to the Zn(2+) binding site.

It belongs to the histidinol dehydrogenase family. Requires Zn(2+) as cofactor.

This is Histidinol dehydrogenase homolog from Colwellia psychrerythraea (strain 34H / ATCC BAA-681) (Vibrio psychroerythus).